Here is a 436-residue protein sequence, read N- to C-terminus: 3-ketoacyl-CoA thiolase (436 aa).

Residue C99 is the Acyl-thioester intermediate of the active site. Active-site proton acceptor residues include H392 and C422.

This sequence belongs to the thiolase-like superfamily. Thiolase family. As to quaternary structure, heterotetramer of two alpha chains (FadJ) and two beta chains (FadI).

The protein resides in the cytoplasm. It carries out the reaction an acyl-CoA + acetyl-CoA = a 3-oxoacyl-CoA + CoA. It functions in the pathway lipid metabolism; fatty acid beta-oxidation. Its function is as follows. Catalyzes the final step of fatty acid oxidation in which acetyl-CoA is released and the CoA ester of a fatty acid two carbons shorter is formed. The chain is 3-ketoacyl-CoA thiolase from Shigella boydii serotype 18 (strain CDC 3083-94 / BS512).